The chain runs to 373 residues: Ferroptosis suppressor protein 1 (373 aa).

The N-myristoyl glycine moiety is linked to residue Gly-2. The chain crosses the membrane as a helical span at residues 13–29 (VVVVGGGFGGTAAASLL). 6-hydroxy-FAD-binding positions include 17–21 (GGGFG), Arg-53, and Val-81. The residue at position 167 (Lys-167) is an N6-acetyllysine. 6-hydroxy-FAD is bound at residue Asp-284.

The protein belongs to the FAD-dependent oxidoreductase family. It depends on 6-hydroxy-FAD as a cofactor. N-myristoylation at Gly-2 mediates the recruitment to lipid droplets and plasma membrane. In terms of processing, acetylation at Lys-167 prevents AIFM2 ubiquitination and degradation, thereby inhibiting ferroptosis. KAT2B mediates acetylation at Lys-167, while HDAC3 removes it. Post-translationally, ubiquitinated. AIFM2 undergoes 'Lys-29'-ubiquitination and proteasomal degradation, which is inhibited by acetylation at Lys-167.

It localises to the lipid droplet. The protein resides in the cell membrane. Its subcellular location is the cytoplasm. The protein localises to the mitochondrion membrane. It is found in the nucleus. It catalyses the reaction ubiquinone-10 + NADH + H(+) = ubiquinol-10 + NAD(+). The catalysed reaction is phylloquinone + NADH + H(+) = phylloquinol + NAD(+). It carries out the reaction menaquinone-4 + NADH + H(+) = menaquinol-4 + NAD(+). The enzyme catalyses menadione + NADH + H(+) = menadiol + NAD(+). Its activity is regulated as follows. The modification by 4-hydroxy-2-nonenal (HNE) adduction in mitochondria results in loss of the oxidoreductase activity and activation of a novel function in mitochondrial oxidative stress signaling. An NAD(P)H-dependent oxidoreductase that acts as a key inhibitor of ferroptosis. At the plasma membrane, catalyzes reduction of coenzyme Q/ubiquinone-10 to ubiquinol-10, a lipophilic radical-trapping antioxidant that prevents lipid oxidative damage and consequently ferroptosis. Acts in parallel to GPX4 to suppress phospholipid peroxidation and ferroptosis. This anti-ferroptotic function is independent of cellular glutathione levels. Also acts as a potent radical-trapping antioxidant by mediating warfarin-resistant vitamin K reduction in the canonical vitamin K cycle: catalyzes NAD(P)H-dependent reduction of vitamin K (phylloquinone, menaquinone-4 and menadione) to hydroquinone forms. Hydroquinones act as potent radical-trapping antioxidants inhibitor of phospholipid peroxidation and ferroptosis. May play a role in mitochondrial stress signaling. Upon oxidative stress, associates with the lipid peroxidation end product 4-hydroxy-2-nonenal (HNE) forming a lipid adduct devoid of oxidoreductase activity, which then translocates from mitochondria into the nucleus triggering DNA damage and cell death. The protein is Ferroptosis suppressor protein 1 (AIFM2) of Taeniopygia guttata (Zebra finch).